The chain runs to 366 residues: MAGSAWVSKVSRLLGAFHNTKQVTRGFAGGVQTVTLIPGDGIGPEISASVMKIFDAAKAPIQWEERNVTAIQGPGGKWMIPPEAKESMDKNKMGLKGPLKTPIAAGHPSMNLLLRKTFDLYANVRPCVSIEGYKTPYTDVNIVTIRENTEGEYSGIEHVIVDGVVQSIKLITEGASKRIAEFAFEYARNNHRSNVTAVHKANIMRMSDGLFLQKCREVAENCKDIKFNEMYLDTVCLNMVQDPSQFDVLVMPNLYGDILSDLCAGLIGGLGVTQSGNIGANGVAIFESVHGTAPDIAGKDMANPTALLLSAVMMLRHMGLFDHAAKIEAACFATIKDGKSLTKDLGGNSKCSDFTEEICRRVKDLD.

The transit peptide at 1–27 (MAGSAWVSKVSRLLGAFHNTKQVTRGF) directs the protein to the mitochondrion. Lys-77 carries the post-translational modification N6-succinyllysine. Thr-101 carries the post-translational modification Phosphothreonine. Arg-115, Arg-125, and Arg-146 together coordinate substrate. Lys-223 bears the N6-acetyllysine mark. Mg(2+) is bound by residues Asp-233, Asp-257, and Asp-261. Lys-343 bears the N6-acetyllysine; alternate mark. The residue at position 343 (Lys-343) is an N6-succinyllysine; alternate. Position 350 is an N6-succinyllysine (Lys-350).

This sequence belongs to the isocitrate and isopropylmalate dehydrogenases family. As to quaternary structure, heterooligomer of subunits alpha (IDH3A), beta (IDH3B), and gamma (IDH3G) in the apparent ratio of 2:1:1. The heterodimer containing one IDH3A and one IDH3B subunit and the heterodimer containing one IDH3A and one IDH3G subunit assemble into a heterotetramer (which contains two subunits of IDH3A, one of IDH3B and one of IDH3G) and further into the heterooctamer. It depends on Mg(2+) as a cofactor. The cofactor is Mn(2+). In terms of tissue distribution, expressed in brown adipose tissue (BAT).

The protein localises to the mitochondrion. It carries out the reaction D-threo-isocitrate + NAD(+) = 2-oxoglutarate + CO2 + NADH. With respect to regulation, the heterotetramer and the heterodimer composed of IDH3A and IDH3G subunits can be allosterically activated by citrate (CIT) or/and ADP, and the two activators can act independently or synergistically. The heterodimer composed of IDH3A and IDH3B subunits cannot be allosterically regulated and the allosteric regulation of the heterotetramer is through the IDH3G subunit and not the IDH3B subunit. The IDH3G subunit contains the allosteric site which consists of a CIT-binding site and an ADP-binding site, and the binding of CIT and ADP causes conformational changes at the allosteric site which are transmitted to the active site in the catalytic subunit (IDH3A) through a cascade of conformational changes at the heterodimer interface, leading to stabilization of the isocitrate-binding at the active site and thus activation of the enzyme. ATP can activate the heterotetramer and the heterodimer composed of IDH3A and IDH3G subunits at low concentrations but inhibits their activities at high concentrations, whereas ATP exhibits only inhibitory effect on the heterodimer composed of IDH3A and IDH3B subunits. In terms of biological role, catalytic subunit of the enzyme which catalyzes the decarboxylation of isocitrate (ICT) into alpha-ketoglutarate. The heterodimer composed of the alpha (IDH3A) and beta (IDH3B) subunits and the heterodimer composed of the alpha (IDH3A) and gamma (IDH3G) subunits, have considerable basal activity but the full activity of the heterotetramer (containing two subunits of IDH3A, one of IDH3B and one of IDH3G) requires the assembly and cooperative function of both heterodimers. This is Isocitrate dehydrogenase [NAD] subunit alpha, mitochondrial from Rattus norvegicus (Rat).